We begin with the raw amino-acid sequence, 130 residues long: Small ribosomal subunit protein uS8 (130 aa).

Belongs to the universal ribosomal protein uS8 family. Part of the 30S ribosomal subunit.

Its function is as follows. One of the primary rRNA binding proteins, it binds directly to 16S rRNA central domain where it helps coordinate assembly of the platform of the 30S subunit. This chain is Small ribosomal subunit protein uS8, found in Thermococcus kodakarensis (strain ATCC BAA-918 / JCM 12380 / KOD1) (Pyrococcus kodakaraensis (strain KOD1)).